Reading from the N-terminus, the 158-residue chain is Large ribosomal subunit protein bL19 (158 aa).

The span at 119–129 (SDRSRVMKDAA) shows a compositional bias: basic and acidic residues. The segment at 119-158 (SDRSRVMKDAARAQQARDAAQGNSSSETQSSTAAVETQGE) is disordered. A compositionally biased stretch (low complexity) spans 130-139 (RAQQARDAAQ). The segment covering 140 to 158 (GNSSSETQSSTAAVETQGE) has biased composition (polar residues).

Belongs to the bacterial ribosomal protein bL19 family.

Its function is as follows. This protein is located at the 30S-50S ribosomal subunit interface and may play a role in the structure and function of the aminoacyl-tRNA binding site. The polypeptide is Large ribosomal subunit protein bL19 (Deinococcus geothermalis (strain DSM 11300 / CIP 105573 / AG-3a)).